A 559-amino-acid chain; its full sequence is Frizzled-1 (559 aa).

The first 35 residues, 1 to 35 (MKHSHLLQRCSAQLCTRGSSLILSLLLSVCLSVEG), serve as a signal peptide directing secretion. The Extracellular portion of the chain corresponds to 36-239 (QYNGEKGISI…FAPEELNFAR (204 aa)). The FZ domain maps to 46–165 (PDHGYCQPIS…NGAGELCVGQ (120 aa)). Intrachain disulfides connect Cys51–Cys112, Cys59–Cys105, Cys96–Cys133, Cys122–Cys162, and Cys126–Cys150. N-linked (GlcNAc...) asparagine glycosylation is present at Asn65. Asn166 carries an N-linked (GlcNAc...) asparagine glycan. A helical transmembrane segment spans residues 240–260 (IWIGIWSVLCCASTLFTVLTY). The Cytoplasmic segment spans residues 261–273 (LVDMKRFSYPERP). Residues 274–294 (IIFLSGCYTMVAIAYIAGFLL) form a helical membrane-spanning segment. The Extracellular portion of the chain corresponds to 295–321 (EDKVVCNERFAEDGYKTVAQGTKKEGC). A helical membrane pass occupies residues 322-342 (TFLFMMLYFFSMASSIWWVIL). Over 343–364 (SLTWFLAAGMKWGHEAIEANSQ) the chain is Cytoplasmic. Residues 365-385 (YFHLAAWAVPAIKTITILAVG) traverse the membrane as a helical segment. Over 386-408 (QVDGDTLSGVCFVGINNVDALRG) the chain is Extracellular. Residues 409-429 (FVLAPLFVYLFIGTSFLLAGF) form a helical membrane-spanning segment. At 430–455 (VSLFRIRTIMKHDGTKTEKLEKLMVR) the chain is on the cytoplasmic side. The helical transmembrane segment at 456–476 (IGIFSVLYTVPATIVIACYFY) threads the bilayer. Over 477 to 513 (EQAFREQWEKSWISQSCKTYAIPCPSTGHPPMSPDFT) the chain is Extracellular. Residues 514 to 534 (VFMIKYLMTLIVGITSGFWIW) form a helical membrane-spanning segment. Residues 535 to 559 (SGKTLNSWRKFYTRLTNSKQGETTV) are Cytoplasmic-facing. The Lys-Thr-X-X-X-Trp motif, mediates interaction with the PDZ domain of Dvl family members signature appears at 537 to 542 (KTLNSW). The PDZ-binding motif lies at 557 to 559 (TTV).

It belongs to the G-protein coupled receptor Fz/Smo family. In terms of assembly, interacts with wnt8. In terms of tissue distribution, in the embryo, expressed in the heart, pronephros and otic vesicles.

The protein localises to the cell membrane. Functionally, receptor for Wnt proteins. Functions in the canonical Wnt/beta-catenin signaling pathway. The canonical Wnt/beta-catenin signaling pathway leads to the activation of disheveled proteins, inhibition of GSK-3 kinase, nuclear accumulation of beta-catenin and activation of Wnt target genes. A second signaling pathway involving PKC and calcium fluxes has been seen for some family members, but it is not yet clear if it represents a distinct pathway or if it can be integrated in the canonical pathway, as PKC seems to be required for Wnt-mediated inactivation of GSK-3 kinase. Both pathways seem to involve interactions with G-proteins. May be involved in transduction and intercellular transmission of polarity information during tissue morphogenesis and/or in differentiated tissues. The polypeptide is Frizzled-1 (fzd1) (Xenopus laevis (African clawed frog)).